Reading from the N-terminus, the 86-residue chain is Small nuclear ribonucleoprotein F (86 aa).

N-acetylserine is present on S2. The region spanning 6 to 78 is the Sm domain; that stretch reads NPKPFLNGLT…VLYIRGVEEE (73 aa).

This sequence belongs to the snRNP Sm proteins family. SmF/LSm6 subfamily. As to quaternary structure, core component of the spliceosomal U1, U2, U4 and U5 small nuclear ribonucleoproteins (snRNPs), the building blocks of the spliceosome. Most spliceosomal snRNPs contain a common set of Sm proteins, SNRPB, SNRPD1, SNRPD2, SNRPD3, SNRPE, SNRPF and SNRPG that assemble in a heptameric protein ring on the Sm site of the small nuclear RNA to form the core snRNP. Component of the U1 snRNP. The U1 snRNP is composed of the U1 snRNA and the 7 core Sm proteins SNRPB, SNRPD1, SNRPD2, SNRPD3, SNRPE, SNRPF and SNRPG, and at least three U1 snRNP-specific proteins SNRNP70/U1-70K, SNRPA/U1-A and SNRPC/U1-C. Component of the U4/U6-U5 tri-snRNP complex composed of the U4, U6 and U5 snRNAs and at least PRPF3, PRPF4, PRPF6, PRPF8, PRPF31, SNRNP200, TXNL4A, SNRNP40, SNRPB, SNRPD1, SNRPD2, SNRPD3, SNRPE, SNRPF, SNRPG, DDX23, CD2BP2, PPIH, SNU13, EFTUD2, SART1 and USP39, plus LSM2, LSM3, LSM4, LSM5, LSM6, LSM7 and LSM8. Component of the U7 snRNP complex, or U7 Sm protein core complex, that is composed of the U7 snRNA and at least LSM10, LSM11, SNRPB, SNRPD3, SNRPE, SNRPF and SNRPG; the complex does not contain SNRPD1 and SNRPD2. Component of the minor spliceosome, which splices U12-type introns. Part of the SMN-Sm complex that contains SMN1, GEMIN2/SIP1, DDX20/GEMIN3, GEMIN4, GEMIN5, GEMIN6, GEMIN7, GEMIN8, STRAP/UNRIP and the Sm proteins SNRPB, SNRPD1, SNRPD2, SNRPD3, SNRPE, SNRPF and SNRPG; catalyzes core snRNPs assembly. Forms a 6S pICln-Sm complex composed of CLNS1A/pICln, SNRPD1, SNRPD2, SNRPE, SNRPF and SNRPG; ring-like structure where CLNS1A/pICln mimics additional Sm proteins and which is unable to assemble into the core snRNP. Interacts with GEMIN2 (via N-terminus); the interaction is direct. Interacts with SNRPD2; the interaction is direct. Interacts with SNRPE; the interaction is direct.

It is found in the cytoplasm. The protein localises to the cytosol. It localises to the nucleus. Functionally, plays a role in pre-mRNA splicing as a core component of the spliceosomal U1, U2, U4 and U5 small nuclear ribonucleoproteins (snRNPs), the building blocks of the spliceosome. Component of both the pre-catalytic spliceosome B complex and activated spliceosome C complexes. As a component of the minor spliceosome, involved in the splicing of U12-type introns in pre-mRNAs. As part of the U7 snRNP it is involved in histone 3'-end processing. This is Small nuclear ribonucleoprotein F (SNRPF) from Homo sapiens (Human).